We begin with the raw amino-acid sequence, 359 residues long: Probable dual-specificity RNA methyltransferase RlmN (359 aa).

The active-site Proton acceptor is the glutamate 91. The Radical SAM core domain maps to 97–335 (QHYGHSVCVT…CVVRQEHGTD (239 aa)). A disulfide bridge links cysteine 104 with cysteine 340. Residues cysteine 111, cysteine 115, and cysteine 118 each contribute to the [4Fe-4S] cluster site. Residues 163–164 (GE), serine 195, 218–220 (SLH), and asparagine 296 contribute to the S-adenosyl-L-methionine site. Residue cysteine 340 is the S-methylcysteine intermediate of the active site.

This sequence belongs to the radical SAM superfamily. RlmN family. [4Fe-4S] cluster is required as a cofactor.

The protein resides in the cytoplasm. It catalyses the reaction adenosine(2503) in 23S rRNA + 2 reduced [2Fe-2S]-[ferredoxin] + 2 S-adenosyl-L-methionine = 2-methyladenosine(2503) in 23S rRNA + 5'-deoxyadenosine + L-methionine + 2 oxidized [2Fe-2S]-[ferredoxin] + S-adenosyl-L-homocysteine. The catalysed reaction is adenosine(37) in tRNA + 2 reduced [2Fe-2S]-[ferredoxin] + 2 S-adenosyl-L-methionine = 2-methyladenosine(37) in tRNA + 5'-deoxyadenosine + L-methionine + 2 oxidized [2Fe-2S]-[ferredoxin] + S-adenosyl-L-homocysteine. Its function is as follows. Specifically methylates position 2 of adenine 2503 in 23S rRNA and position 2 of adenine 37 in tRNAs. The sequence is that of Probable dual-specificity RNA methyltransferase RlmN from Streptococcus pyogenes serotype M12 (strain MGAS2096).